The following is a 562-amino-acid chain: Glucocorticoid modulatory element-binding protein 1 (562 aa).

Ala-2 carries the post-translational modification N-acetylalanine. Positions Ala-72–Asp-156 constitute an SAND domain. Cys-103 contributes to the Zn(2+) binding site. The DNA site is built by Lys-129, Lys-133, Lys-136, and Arg-147. Zn(2+) contacts are provided by His-160, Cys-164, and Cys-168. The stretch at Leu-311–Val-357 forms a coiled coil. Residues Pro-360–Ser-384 are disordered. Polar residues predominate over residues Pro-375–Ser-384.

As to quaternary structure, homodimer, and heterodimer of GMEB1 and GMEB2. Interacts with the glucocorticoid receptor (NR3C1) and NCOA2/TIF2. May interact with HSP27 and CREB-binding protein (CBP). Interacts with TRIM63.

The protein resides in the nucleus. The protein localises to the cytoplasm. Trans-acting factor that binds to glucocorticoid modulatory elements (GME) present in the TAT (tyrosine aminotransferase) promoter and increases sensitivity to low concentrations of glucocorticoids. Also binds to the transferrin receptor promoter. This chain is Glucocorticoid modulatory element-binding protein 1 (Gmeb1), found in Rattus norvegicus (Rat).